Reading from the N-terminus, the 345-residue chain is Holliday junction branch migration complex subunit RuvB (345 aa).

The interval 3–187 (LDILQNRNNL…FGFTARLDFY (185 aa)) is large ATPase domain (RuvB-L). ATP is bound by residues L26, R27, G68, K71, T72, T73, 134 to 136 (EDF), R177, Y187, and R224. T72 lines the Mg(2+) pocket. Residues 188 to 259 (SPEELLQVLI…IALKAMDVYE (72 aa)) are small ATPAse domain (RuvB-S). The tract at residues 262 to 345 (SLGLDRLDRA…EDLSGFELYL (84 aa)) is head domain (RuvB-H). DNA contacts are provided by R317 and R322.

This sequence belongs to the RuvB family. As to quaternary structure, homohexamer. Forms an RuvA(8)-RuvB(12)-Holliday junction (HJ) complex. HJ DNA is sandwiched between 2 RuvA tetramers; dsDNA enters through RuvA and exits via RuvB. An RuvB hexamer assembles on each DNA strand where it exits the tetramer. Each RuvB hexamer is contacted by two RuvA subunits (via domain III) on 2 adjacent RuvB subunits; this complex drives branch migration. In the full resolvosome a probable DNA-RuvA(4)-RuvB(12)-RuvC(2) complex forms which resolves the HJ.

It is found in the cytoplasm. It catalyses the reaction ATP + H2O = ADP + phosphate + H(+). Functionally, the RuvA-RuvB-RuvC complex processes Holliday junction (HJ) DNA during genetic recombination and DNA repair, while the RuvA-RuvB complex plays an important role in the rescue of blocked DNA replication forks via replication fork reversal (RFR). RuvA specifically binds to HJ cruciform DNA, conferring on it an open structure. The RuvB hexamer acts as an ATP-dependent pump, pulling dsDNA into and through the RuvAB complex. RuvB forms 2 homohexamers on either side of HJ DNA bound by 1 or 2 RuvA tetramers; 4 subunits per hexamer contact DNA at a time. Coordinated motions by a converter formed by DNA-disengaged RuvB subunits stimulates ATP hydrolysis and nucleotide exchange. Immobilization of the converter enables RuvB to convert the ATP-contained energy into a lever motion, pulling 2 nucleotides of DNA out of the RuvA tetramer per ATP hydrolyzed, thus driving DNA branch migration. The RuvB motors rotate together with the DNA substrate, which together with the progressing nucleotide cycle form the mechanistic basis for DNA recombination by continuous HJ branch migration. Branch migration allows RuvC to scan DNA until it finds its consensus sequence, where it cleaves and resolves cruciform DNA. The chain is Holliday junction branch migration complex subunit RuvB from Tropheryma whipplei (strain TW08/27) (Whipple's bacillus).